The sequence spans 187 residues: Adenylate kinase (187 aa).

Position 10–15 (10–15) interacts with ATP; the sequence is GSGKGT. The segment at 30-59 is NMP; the sequence is STGDLLRAEVAAGSPLGLKAKEVMARGDLV. Residues Thr31, Arg36, 57-59, 85-88, and Gln92 each bind AMP; these read DLV and GYPR. The segment at 126–136 is LID; the sequence is GRAKAEGREDD. Arg127 contributes to the ATP binding site. Residues Arg133 and Arg144 each contribute to the AMP site. Position 172 (Gly172) interacts with ATP.

It belongs to the adenylate kinase family. Monomer.

It is found in the cytoplasm. It carries out the reaction AMP + ATP = 2 ADP. It participates in purine metabolism; AMP biosynthesis via salvage pathway; AMP from ADP: step 1/1. Catalyzes the reversible transfer of the terminal phosphate group between ATP and AMP. Plays an important role in cellular energy homeostasis and in adenine nucleotide metabolism. The polypeptide is Adenylate kinase (Xanthomonas axonopodis pv. citri (strain 306)).